The sequence spans 368 residues: Histidinol-phosphate aminotransferase (368 aa).

K228 carries the N6-(pyridoxal phosphate)lysine modification.

This sequence belongs to the class-II pyridoxal-phosphate-dependent aminotransferase family. Histidinol-phosphate aminotransferase subfamily. In terms of assembly, homodimer. Pyridoxal 5'-phosphate serves as cofactor.

The catalysed reaction is L-histidinol phosphate + 2-oxoglutarate = 3-(imidazol-4-yl)-2-oxopropyl phosphate + L-glutamate. It functions in the pathway amino-acid biosynthesis; L-histidine biosynthesis; L-histidine from 5-phospho-alpha-D-ribose 1-diphosphate: step 7/9. This chain is Histidinol-phosphate aminotransferase (hisC), found in Methylobacillus flagellatus.